The primary structure comprises 222 residues: Probable GTP-binding protein EngB (222 aa).

Residues 27–202 (TGIEVAFAGR…AKKLDEWFLG (176 aa)) enclose the EngB-type G domain. GTP is bound by residues 35 to 42 (GRSNAGKS), 61 to 65 (GRTQL), 81 to 84 (DLPG), 148 to 151 (TKAD), and 181 to 183 (FSS). Mg(2+) is bound by residues Ser42 and Thr63.

The protein belongs to the TRAFAC class TrmE-Era-EngA-EngB-Septin-like GTPase superfamily. EngB GTPase family. Mg(2+) is required as a cofactor.

Functionally, necessary for normal cell division and for the maintenance of normal septation. This is Probable GTP-binding protein EngB from Pseudoalteromonas translucida (strain TAC 125).